A 342-amino-acid polypeptide reads, in one-letter code: MEIPVEFLLEKTIIVTAVFTISLVIAMYSTYAERKVSALLQDRIGPNRAGPFGLLQPLADGVKFFMKEEIIPSSANKALFILGPSIAMMTACLTGAVIPWGSYLEIGGDQIALQVTDINIGVLYIFAVVSIGVYGVMIGGWASNNKFSLMGAIRASSQMISYEIAMGLSIIALVMTTGTLSIGEIVQQQTTDWWNIVYQPLGFFIFMVCSFAECNRTPFDLPECEAELIGGYHTEYSSMKLGLYLFAEYINMFISSAVMSAFYFGGYDIPYIETLGLDQNTVTILGTLFFFTKIVLFIFLFMWVRWTLPRFRYDQLMNLGWKIMIPMAIINIIITGACILLF.

Helical transmembrane passes span 7 to 27, 78 to 98, 120 to 140, 166 to 186, 193 to 213, 245 to 265, 284 to 304, and 322 to 342; these read FLLE…VIAM, ALFI…GAVI, IGVL…MIGG, MGLS…GEIV, WWNI…SFAE, LFAE…FYFG, ILGT…FMWV, and KIMI…ILLF.

The protein belongs to the complex I subunit 1 family. In terms of assembly, NDH-1 is composed of 14 different subunits. Subunits NuoA, H, J, K, L, M, N constitute the membrane sector of the complex.

It localises to the cell inner membrane. The enzyme catalyses a quinone + NADH + 5 H(+)(in) = a quinol + NAD(+) + 4 H(+)(out). NDH-1 shuttles electrons from NADH, via FMN and iron-sulfur (Fe-S) centers, to quinones in the respiratory chain. The immediate electron acceptor for the enzyme in this species is believed to be ubiquinone. Couples the redox reaction to proton translocation (for every two electrons transferred, four hydrogen ions are translocated across the cytoplasmic membrane), and thus conserves the redox energy in a proton gradient. This subunit may bind ubiquinone. In Cytophaga hutchinsonii (strain ATCC 33406 / DSM 1761 / CIP 103989 / NBRC 15051 / NCIMB 9469 / D465), this protein is NADH-quinone oxidoreductase subunit H 1.